Reading from the N-terminus, the 855-residue chain is Envelope glycoprotein gp150 (855 aa).

Topologically, residues 1 to 784 (MAEGFAVNRQ…WLGNIPRYLK (784 aa)) are extracellular. Residues asparagine 220, asparagine 258, asparagine 269, asparagine 274, asparagine 298, asparagine 330, asparagine 336, asparagine 342, asparagine 418, asparagine 422, asparagine 448, asparagine 469, asparagine 481, asparagine 499, asparagine 518, asparagine 531, and asparagine 548 are each glycosylated (N-linked (GlcNAc...) asparagine; by host). Residues 615 to 635 (VMLALATVLSMAGAGTGATAI) are fusion peptide. Positions 642 to 692 (HQVLATHQETIEKITEALKVNNLRLVTLEHQVLVIGLKVEAIEKFLYTAFA) form a coiled coil. Residues 661-679 (VNNLRLVTLEHQVLVIGLK) are immunosuppression. Residues asparagine 716, asparagine 720, and asparagine 736 are each glycosylated (N-linked (GlcNAc...) asparagine; by host). Residues 735 to 771 (YNQTKDLQQKFYEIIMDMEQNNVQGRKGLQQLQEWED) adopt a coiled-coil conformation. The helical transmembrane segment at 785–805 (GLLGGILGIGLGVLLLILCLP) threads the bilayer. The Cytoplasmic segment spans residues 806-855 (TLVDCIRNCISKVLGYTVIAMPEVEEEEIQPPMELRRNGRQCDMSEKEEE). Residues 835–855 (QPPMELRRNGRQCDMSEKEEE) form a disordered region.

As to quaternary structure, the mature envelope protein (Env) consists of a trimer of SU-TM heterodimers attached by noncovalent interactions or by a labile interchain disulfide bond. Specific enzymatic cleavages in vivo yield mature proteins. Envelope glycoproteins are synthesized as an inactive precursor that is N-glycosylated and processed likely by host cell furin or by a furin-like protease in the Golgi to yield the mature SU and TM proteins. The cleavage site between SU and TM requires the minimal sequence [KR]-X-[KR]-R.

The protein localises to the virion membrane. It is found in the host cell membrane. The surface protein (SU) attaches the virus to the host cell by binding to its receptor. This interaction triggers the refolding of the transmembrane protein (TM) and is thought to activate its fusogenic potential by unmasking its fusion peptide. Fusion occurs at the host cell plasma membrane. In terms of biological role, the transmembrane protein (TM) acts as a class I viral fusion protein. Under the current model, the protein has at least 3 conformational states: pre-fusion native state, pre-hairpin intermediate state, and post-fusion hairpin state. During viral and target cell membrane fusion, the coiled coil regions (heptad repeats) assume a trimer-of-hairpins structure, positioning the fusion peptide in close proximity to the C-terminal region of the ectodomain. The formation of this structure appears to drive apposition and subsequent fusion of viral and target cell membranes. Membranes fusion leads to delivery of the nucleocapsid into the cytoplasm. The sequence is that of Envelope glycoprotein gp150 (env) from Feline immunodeficiency virus (strain UK2) (FIV).